Consider the following 238-residue polypeptide: ATP synthase subunit a (238 aa).

The next 5 helical transmembrane spans lie at 18–38, 76–96, 117–137, 195–215, and 216–236; these read MSTVLMTTIACLIVFLITFIG, FIVLAYALLFYVFVANMLGLP, VLTLTMAAFVVILTHYYGIKI, LIGMFGAFLPLIVWQAFGLFI, and GAIQAYIFAMLAMVYMAHKVE.

It belongs to the ATPase A chain family. In terms of assembly, F-type ATPases have 2 components, CF(1) - the catalytic core - and CF(0) - the membrane proton channel. CF(1) has five subunits: alpha(3), beta(3), gamma(1), delta(1), epsilon(1). CF(0) has three main subunits: a(1), b(2) and c(9-12). The alpha and beta chains form an alternating ring which encloses part of the gamma chain. CF(1) is attached to CF(0) by a central stalk formed by the gamma and epsilon chains, while a peripheral stalk is formed by the delta and b chains.

Its subcellular location is the cell membrane. In terms of biological role, key component of the proton channel; it plays a direct role in the translocation of protons across the membrane. The chain is ATP synthase subunit a from Alkalihalophilus pseudofirmus (strain ATCC BAA-2126 / JCM 17055 / OF4) (Bacillus pseudofirmus).